Reading from the N-terminus, the 427-residue chain is Inward rectifier potassium channel 2 (427 aa).

The Cytoplasmic segment spans residues 1 to 81 (MGSVRTNRYS…IFTTCVDIRW (81 aa)). Position 76 is an S-nitrosocysteine (C76). A helical transmembrane segment spans residues 82–106 (RWMLVIFCLAFVLSWLFFGCVFWLI). Over 107–128 (ALLHGDLDASKESKACVSEVNS) the chain is Extracellular. The segment at residues 129–140 (FTAAFLFSIETQ) is an intramembrane region (helical; Pore-forming). An intramembrane region (pore-forming) is located at residues 141–147 (TTIGYGF). Positions 142–147 (TIGYGF) match the Selectivity filter motif. Residues 148 to 156 (RCVTDECPV) are Extracellular-facing. The chain crosses the membrane as a helical span at residues 157–178 (AVFMVVFQSIVGCIIDAFIIGA). At 179 to 427 (VMAKMAKPKK…PRPLRRESEI (249 aa)) the chain is on the cytoplasmic side. Residues 181 to 208 (AKMAKPKKRNETLVFSHNAVIAMRDGKL) are polyphosphoinositide (PIP2)-binding. The interval 384–427 (SKEEDDSENGVPESTSTDTPPDLDLHNQASVPLEPRPLRRESEI) is disordered. The PDZ-binding signature appears at 425-427 (SEI).

The protein belongs to the inward rectifier-type potassium channel (TC 1.A.2.1) family. KCNJ2 subfamily. As to quaternary structure, homotetramer. Homomultimeric and heteromultimeric association with KCNJ4/Kir2.3. Can form heteromeric channels with Kir2.6/KCNJ18. Associates, via its PDZ-recognition domain, with a complex containing LIN7A, LIN7B, LIN7C, DLG1, CASK and APBA1. Post-translationally, S-nitrosylation increases the open probability and inward rectifying currents.

It is found in the cell membrane. The protein localises to the sarcolemma. It localises to the T-tubule. The enzyme catalyses K(+)(in) = K(+)(out). With respect to regulation, activated by phosphatidylinositol 4,5 biphosphate (PtdIns(4,5)P2). In terms of biological role, inward rectifier potassium channels are characterized by a greater tendency to allow potassium to flow into the cell rather than out of it. Their voltage dependence is regulated by the concentration of extracellular potassium; as external potassium is raised, the voltage range of the channel opening shifts to more positive voltages. The inward rectification is mainly due to the blockage of outward current by internal magnesium. Blocked by external barium or cesium. Probably participates in establishing action potential waveform and excitability of neuronal and muscle tissues. This chain is Inward rectifier potassium channel 2 (KCNJ2), found in Canis lupus familiaris (Dog).